The primary structure comprises 380 residues: Flagellar P-ring protein (380 aa).

A signal peptide spans 1-35 (MRFFTQSPFPLRTLTRRLTAFVCVGLLLLPGFTLA).

Belongs to the FlgI family. In terms of assembly, the basal body constitutes a major portion of the flagellar organelle and consists of four rings (L,P,S, and M) mounted on a central rod.

The protein localises to the periplasm. It is found in the bacterial flagellum basal body. In terms of biological role, assembles around the rod to form the L-ring and probably protects the motor/basal body from shearing forces during rotation. This Gluconobacter oxydans (strain 621H) (Gluconobacter suboxydans) protein is Flagellar P-ring protein.